Reading from the N-terminus, the 156-residue chain is Small ribosomal subunit protein uS7 (156 aa).

Belongs to the universal ribosomal protein uS7 family. In terms of assembly, part of the 30S ribosomal subunit. Contacts proteins S9 and S11.

In terms of biological role, one of the primary rRNA binding proteins, it binds directly to 16S rRNA where it nucleates assembly of the head domain of the 30S subunit. Is located at the subunit interface close to the decoding center, probably blocks exit of the E-site tRNA. This is Small ribosomal subunit protein uS7 from Staphylococcus aureus (strain USA300).